The sequence spans 65 residues: Sec-independent protein translocase protein TatA (65 aa).

The helical transmembrane segment at 9–29 (ILIIVLLVVVVFGIGKLPQVG) threads the bilayer. A disordered region spans residues 43–65 (SSGEEEKEEVETKEETKTIEKSE). Residues 45–54 (GEEEKEEVET) show a composition bias toward acidic residues. Over residues 55 to 65 (KEETKTIEKSE) the composition is skewed to basic and acidic residues.

It belongs to the TatA/E family. As to quaternary structure, forms a complex with TatC.

The protein localises to the cell membrane. Part of the twin-arginine translocation (Tat) system that transports large folded proteins containing a characteristic twin-arginine motif in their signal peptide across membranes. TatA could form the protein-conducting channel of the Tat system. The chain is Sec-independent protein translocase protein TatA from Dehalococcoides mccartyi (strain ATCC BAA-2266 / KCTC 15142 / 195) (Dehalococcoides ethenogenes (strain 195)).